The primary structure comprises 201 residues: Superoxide dismutase [Mn] (201 aa).

Positions 27, 81, 163, and 167 each coordinate Mn(2+).

It belongs to the iron/manganese superoxide dismutase family. Homodimer. Mn(2+) is required as a cofactor.

The catalysed reaction is 2 superoxide + 2 H(+) = H2O2 + O2. Its function is as follows. Destroys superoxide anion radicals which are normally produced within the cells and which are toxic to biological systems. May play a critical role against oxidative stress, affecting both the survival and the virulence of S.pneumoniae. This chain is Superoxide dismutase [Mn] (sodA), found in Streptococcus pneumoniae serotype 4 (strain ATCC BAA-334 / TIGR4).